The primary structure comprises 97 residues: Co-chaperonin GroES (97 aa).

The protein belongs to the GroES chaperonin family. Heptamer of 7 subunits arranged in a ring. Interacts with the chaperonin GroEL.

It is found in the cytoplasm. In terms of biological role, together with the chaperonin GroEL, plays an essential role in assisting protein folding. The GroEL-GroES system forms a nano-cage that allows encapsulation of the non-native substrate proteins and provides a physical environment optimized to promote and accelerate protein folding. GroES binds to the apical surface of the GroEL ring, thereby capping the opening of the GroEL channel. The chain is Co-chaperonin GroES from Klebsiella pneumoniae subsp. pneumoniae (strain ATCC 700721 / MGH 78578).